Here is a 141-residue protein sequence, read N- to C-terminus: Hemoglobin subunit alpha (141 aa).

The region spanning 1–141 (VLSDNDKTNV…VSTVLTSKYR (141 aa)) is the Globin domain. Position 3 is a phosphoserine (serine 3). The residue at position 7 (lysine 7) is an N6-succinyllysine. A Phosphothreonine modification is found at threonine 8. Lysine 11 bears the N6-succinyllysine mark. At lysine 16 the chain carries N6-acetyllysine; alternate. Lysine 16 is modified (N6-succinyllysine; alternate). At tyrosine 24 the chain carries Phosphotyrosine. Residue serine 35 is modified to Phosphoserine. At lysine 40 the chain carries N6-succinyllysine. Histidine 58 provides a ligand contact to O2. Histidine 87 is a heme b binding site. At serine 102 the chain carries Phosphoserine. Threonine 108 is subject to Phosphothreonine. Residue serine 124 is modified to Phosphoserine. A phosphothreonine mark is found at threonine 134 and threonine 137. Serine 138 is modified (phosphoserine).

Belongs to the globin family. Heterotetramer of two alpha chains and two beta chains. In terms of tissue distribution, red blood cells.

Functionally, involved in oxygen transport from the lung to the various peripheral tissues. Hemopressin acts as an antagonist peptide of the cannabinoid receptor CNR1. Hemopressin-binding efficiently blocks cannabinoid receptor CNR1 and subsequent signaling. This Loxodonta africana (African elephant) protein is Hemoglobin subunit alpha (HBA).